The primary structure comprises 155 residues: Deoxyuridine 5'-triphosphate nucleotidohydrolase (155 aa).

Substrate-binding positions include 74–76 (RSG), N87, and 91–93 (TID).

This sequence belongs to the dUTPase family. Mg(2+) serves as cofactor.

It carries out the reaction dUTP + H2O = dUMP + diphosphate + H(+). It participates in pyrimidine metabolism; dUMP biosynthesis; dUMP from dCTP (dUTP route): step 2/2. Its function is as follows. This enzyme is involved in nucleotide metabolism: it produces dUMP, the immediate precursor of thymidine nucleotides and it decreases the intracellular concentration of dUTP so that uracil cannot be incorporated into DNA. This Cereibacter sphaeroides (strain KD131 / KCTC 12085) (Rhodobacter sphaeroides) protein is Deoxyuridine 5'-triphosphate nucleotidohydrolase.